The sequence spans 185 residues: UPF0397 protein LBA0922 (185 aa).

The next 5 membrane-spanning stretches (helical) occupy residues 11-31 (VVAI…TSIP), 45-65 (FLAF…GFIG), 72-92 (IMYG…GWII), 111-131 (IILF…VVAP), and 146-166 (FVQG…IGTI).

The protein belongs to the UPF0397 family.

It is found in the cell membrane. The chain is UPF0397 protein LBA0922 from Lactobacillus acidophilus (strain ATCC 700396 / NCK56 / N2 / NCFM).